A 475-amino-acid polypeptide reads, in one-letter code: Probable GABA permease (475 aa).

12 consecutive transmembrane segments (helical) span residues 27–47, 48–68, 105–125, 127–147, 163–183, 211–231, 250–270, 296–316, 345–365, 368–388, 413–433, and 438–458; these read VTML…SGHA, IAAA…LVVL, LYWW…AAIL, AWFP…LLTV, FALL…VAIV, AVLG…IVTI, VIWR…SIVP, LIVD…AIYT, PAVL…YFAP, VFTF…LVIA, PWLT…MLIM, and HEVF…LLNA.

It belongs to the amino acid-polyamine-organocation (APC) superfamily. Amino acid transporter (AAT) (TC 2.A.3.1) family.

Its subcellular location is the membrane. In terms of biological role, involved in the degradation of beta-alanine. The protein is Probable GABA permease (bauD) of Pseudomonas aeruginosa (strain ATCC 15692 / DSM 22644 / CIP 104116 / JCM 14847 / LMG 12228 / 1C / PRS 101 / PAO1).